The chain runs to 358 residues: MGAPPKTAQNLSFVLEGIHKVKFEDRPIPQLRDAHDVLVDVRFTGICGSDVHYWEHGSIGQFVVKDPMVLGHESSGVISKVGSAVTTLKVGDHVAMEPGIPCRRCEPCKEGKYNLCEKMAFAATPPYDGTLAKYYVLPEDFCYKLPENINLQEAAVMEPLSVAVHIVKQANVAPGQSVVVFGAGPVGLLCCAVARAFGSPKVIAVDIQKGRLEFAKKYAATAIFEPSKVSALENAERIVNENDLGRGADIVIDASGAEPSVHTGIHVLRPGGTYVQGGMGRNEITFPIMAACTKELNVRGSFRYGSGDYKLAVNLVASGKVSVKELITGVVSFEDAEQAFHEVKAGKGIKTLIAGVDV.

3 residues coordinate Zn(2+): cysteine 47, histidine 72, and glutamate 73. 182-187 is an NAD(+) binding site; it reads GAGPVG.

It belongs to the zinc-containing alcohol dehydrogenase family. It depends on Zn(2+) as a cofactor.

The enzyme catalyses xylitol + NAD(+) = D-xylulose + NADH + H(+). Its pathway is carbohydrate degradation; L-arabinose degradation via L-arabinitol; D-xylulose 5-phosphate from L-arabinose (fungal route): step 4/5. Its function is as follows. Xylitol dehydrogenase which catalyzes the conversion of xylitol to D-xylulose. Xylose is a major component of hemicelluloses such as xylan. Most fungi utilize D-xylose via three enzymatic reactions, xylose reductase (XR), xylitol dehydrogenase (XDH), and xylulokinase, to form xylulose 5-phosphate, which enters pentose phosphate pathway. This Aspergillus oryzae (strain ATCC 42149 / RIB 40) (Yellow koji mold) protein is D-xylulose reductase A (xdhA).